The primary structure comprises 93 residues: Large ribosomal subunit protein uL23 (93 aa).

Belongs to the universal ribosomal protein uL23 family. In terms of assembly, part of the 50S ribosomal subunit. Contacts protein L29, and trigger factor when it is bound to the ribosome.

In terms of biological role, one of the early assembly proteins it binds 23S rRNA. One of the proteins that surrounds the polypeptide exit tunnel on the outside of the ribosome. Forms the main docking site for trigger factor binding to the ribosome. This is Large ribosomal subunit protein uL23 from Natranaerobius thermophilus (strain ATCC BAA-1301 / DSM 18059 / JW/NM-WN-LF).